Reading from the N-terminus, the 297-residue chain is Ribosomal RNA small subunit methyltransferase H (297 aa).

S-adenosyl-L-methionine is bound by residues 30–32, aspartate 48, phenylalanine 75, aspartate 96, and glutamine 103; that span reads GGY.

This sequence belongs to the methyltransferase superfamily. RsmH family.

The protein resides in the cytoplasm. It carries out the reaction cytidine(1402) in 16S rRNA + S-adenosyl-L-methionine = N(4)-methylcytidine(1402) in 16S rRNA + S-adenosyl-L-homocysteine + H(+). Its function is as follows. Specifically methylates the N4 position of cytidine in position 1402 (C1402) of 16S rRNA. The sequence is that of Ribosomal RNA small subunit methyltransferase H from Ehrlichia chaffeensis (strain ATCC CRL-10679 / Arkansas).